The chain runs to 701 residues: DC-STAMP domain-containing protein 2 (701 aa).

4 consecutive transmembrane segments (helical) span residues 15–35, 40–60, 82–102, and 215–235; these read TCGF…ELLG, PFGC…GMGF, LLLL…NTLQ, and FPHL…LASL. Asn-272 and Asn-284 each carry an N-linked (GlcNAc...) asparagine glycan. 2 consecutive transmembrane segments (helical) span residues 310–330 and 404–424; these read ALSL…IQAL and LLIM…LDLA. Residue Asn-468 is glycosylated (N-linked (GlcNAc...) asparagine). A helical transmembrane segment spans residues 488-508; it reads YIVIGTMYGLCFFVTLFGSYV. Residues 673–701 form a disordered region; the sequence is LQEALGTNLSDKSTSKPERAGNRNQDRKQ. The span at 685 to 701 shows a compositional bias: basic and acidic residues; it reads STSKPERAGNRNQDRKQ.

As to quaternary structure, interacts with DCST1. In terms of tissue distribution, expressed in testis.

Its subcellular location is the cytoplasmic vesicle. The protein resides in the secretory vesicle. It localises to the acrosome membrane. Essential sperm cell-surface protein required for sperm-egg fusion and fertilization. This is DC-STAMP domain-containing protein 2 from Mus musculus (Mouse).